Reading from the N-terminus, the 363-residue chain is uncharacterized protein (363 aa).

Transmembrane regions (helical) follow at residues 20–40, 63–83, 101–121, 141–161, 186–206, 227–247, and 268–288; these read WFFT…NTNI, INFA…FLVM, FPLI…GVQS, SVWQ…FTAF, FSLL…IMLA, IFKY…CVVL, and FLIV…WYVL. The interval 329–363 is disordered; the sequence is PRADLTPNDTLHMESKKKPLSQSPRVVIEEEDVAE.

Its subcellular location is the membrane. This is an uncharacterized protein from Caenorhabditis elegans.